An 84-amino-acid polypeptide reads, in one-letter code: Putative membrane protein insertion efficiency factor (84 aa).

This sequence belongs to the UPF0161 family.

The protein resides in the cell inner membrane. In terms of biological role, could be involved in insertion of integral membrane proteins into the membrane. This chain is Putative membrane protein insertion efficiency factor, found in Shewanella loihica (strain ATCC BAA-1088 / PV-4).